The primary structure comprises 60 residues: UPF0434 protein KPN78578_09190 (60 aa).

The protein belongs to the UPF0434 family.

This chain is UPF0434 protein KPN78578_09190, found in Klebsiella pneumoniae subsp. pneumoniae (strain ATCC 700721 / MGH 78578).